The following is a 578-amino-acid chain: Probable lysosomal cobalamin transporter (578 aa).

The next 2 membrane-spanning stretches (helical) occupy residues 8 to 28 (LIWVVYAIAIAVLIAVASVFI) and 46 to 66 (IFAITTLLATVLLLPVDVALV). Residue Asn-70 is glycosylated (N-linked (GlcNAc...) asparagine). Helical transmembrane passes span 95-115 (VVYYLLYSLDALLCLLVIPFT) and 145-165 (TITFIAIVIVLFLVGFFVPVA). N-linked (GlcNAc...) asparagine glycosylation occurs at Asn-168. 6 helical membrane passes run 188-208 (ALTFALGLLITIGLCLYVLYT), 312-332 (LLGGIILLIIALVIWVSMLLT), 347-367 (GYILGHITVFNPINWVFVQAA), 375-395 (VIFTLLVLLFFCSSVVGIAIV), 419-439 (LTTAMLMLTILALNYSVSMVV), and 506-526 (FFGVIFFWGQFVFLGVYLIVV). The interval 539–578 (RQMDEDAEEAEEEGLLASTGRRLDTAWQDITGRSNRQRDS) is disordered. Residues 540 to 552 (QMDEDAEEAEEEG) are compositionally biased toward acidic residues.

The protein belongs to the LIMR family. LMBRD1 subfamily.

The protein resides in the lysosome membrane. Probable lysosomal cobalamin transporter. Required to export cobalamin from lysosomes allowing its conversion to cofactors. This Aspergillus terreus (strain NIH 2624 / FGSC A1156) protein is Probable lysosomal cobalamin transporter.